The chain runs to 637 residues: Threonine--tRNA ligase (637 aa).

Residues 1-61 form the TGS domain; sequence MPVITLPDGS…DKDAELAIVT (61 aa). The interval 242-533 is catalytic; sequence DHRKIGKKLG…LIEHYEGAFP (292 aa). Residues Cys-333, His-384, and His-510 each contribute to the Zn(2+) site.

The protein belongs to the class-II aminoacyl-tRNA synthetase family. Homodimer. The cofactor is Zn(2+).

The protein localises to the cytoplasm. The enzyme catalyses tRNA(Thr) + L-threonine + ATP = L-threonyl-tRNA(Thr) + AMP + diphosphate + H(+). Functionally, catalyzes the attachment of threonine to tRNA(Thr) in a two-step reaction: L-threonine is first activated by ATP to form Thr-AMP and then transferred to the acceptor end of tRNA(Thr). Also edits incorrectly charged L-seryl-tRNA(Thr). This Hahella chejuensis (strain KCTC 2396) protein is Threonine--tRNA ligase.